Reading from the N-terminus, the 92-residue chain is Small ribosomal subunit protein uS19 (92 aa).

It belongs to the universal ribosomal protein uS19 family.

Protein S19 forms a complex with S13 that binds strongly to the 16S ribosomal RNA. The polypeptide is Small ribosomal subunit protein uS19 (Cyanothece sp. (strain PCC 7425 / ATCC 29141)).